A 244-amino-acid polypeptide reads, in one-letter code: Phosphoadenosine 5'-phosphosulfate reductase (244 aa).

Cysteine 239 acts as the Nucleophile; cysteine thiosulfonate intermediate in catalysis.

It belongs to the PAPS reductase family. CysH subfamily.

It is found in the cytoplasm. It catalyses the reaction [thioredoxin]-disulfide + sulfite + adenosine 3',5'-bisphosphate + 2 H(+) = [thioredoxin]-dithiol + 3'-phosphoadenylyl sulfate. It functions in the pathway sulfur metabolism; hydrogen sulfide biosynthesis; sulfite from sulfate: step 3/3. In terms of biological role, catalyzes the formation of sulfite from phosphoadenosine 5'-phosphosulfate (PAPS) using thioredoxin as an electron donor. This is Phosphoadenosine 5'-phosphosulfate reductase from Yersinia enterocolitica serotype O:8 / biotype 1B (strain NCTC 13174 / 8081).